The following is a 398-amino-acid chain: Serine/threonine-protein kinase 32A (398 aa).

G2 carries the N-myristoyl glycine lipid modification. In terms of domain architecture, Protein kinase spans 23 to 281 (FEILRAIGKG…LTDIQNFPYM (259 aa)). ATP-binding positions include 29-37 (IGKGSFGKV) and K52. Residue D146 is the Proton acceptor of the active site. The interval 379 to 398 (ALEQTKNNTEEEEDGQNNNL) is disordered. A compositionally biased stretch (acidic residues) spans 388–398 (EEEEDGQNNNL).

The protein belongs to the protein kinase superfamily. Ser/Thr protein kinase family. Mg(2+) serves as cofactor.

It is found in the cell membrane. It carries out the reaction L-seryl-[protein] + ATP = O-phospho-L-seryl-[protein] + ADP + H(+). It catalyses the reaction L-threonyl-[protein] + ATP = O-phospho-L-threonyl-[protein] + ADP + H(+). The polypeptide is Serine/threonine-protein kinase 32A (Mus musculus (Mouse)).